The primary structure comprises 196 residues: Dimiconin (196 aa).

An N-terminal signal peptide occupies residues 1–21; sequence MKTIIVVTIFGILTCAYPTDG. N-linked (GlcNAc...) asparagine glycosylation is found at N62 and N187.

This sequence belongs to the calycin superfamily. Triabin family. Salivary gland.

It localises to the secreted. In terms of biological role, inhibits the intrinsic blood coagulation pathway by blocking the activation of host coagulation factor XII (F12) but not the enzymatic activity of activated F12. This chain is Dimiconin, found in Triatoma dimidiata (Kissing bug).